The primary structure comprises 272 residues: Alcohol dehydrogenase-related 31 kDa protein (272 aa).

An NAD(+)-binding site is contributed by 11-34 (YVADCGGIALETSKVLMTKNIAKL). S139 contacts substrate. Residue Y152 is the Proton acceptor of the active site.

The protein belongs to the short-chain dehydrogenases/reductases (SDR) family.

This chain is Alcohol dehydrogenase-related 31 kDa protein (Adhr), found in Drosophila teissieri (Fruit fly).